A 162-amino-acid polypeptide reads, in one-letter code: Endoribonuclease YbeY (162 aa).

Zn(2+)-binding residues include H128, H132, and H138.

It belongs to the endoribonuclease YbeY family. Zn(2+) serves as cofactor.

It localises to the cytoplasm. Single strand-specific metallo-endoribonuclease involved in late-stage 70S ribosome quality control and in maturation of the 3' terminus of the 16S rRNA. The polypeptide is Endoribonuclease YbeY (Levilactobacillus brevis (strain ATCC 367 / BCRC 12310 / CIP 105137 / JCM 1170 / LMG 11437 / NCIMB 947 / NCTC 947) (Lactobacillus brevis)).